The primary structure comprises 547 residues: Immunoglobulin epsilon heavy chain (547 aa).

Gln-1 carries the post-translational modification Pyrrolidone carboxylic acid. 5 consecutive Ig-like domains span residues 1–120 (QVQL…TEVT), 130–223 (PSVF…KTFS), 232–329 (PTVK…KKCA), 333–437 (PRGV…TKTS), and 443–542 (PEVY…RAVS). Residues 1 to 124 (QVQLVQSGAE…EGTEVTYTVS (124 aa)) form a variable (V) domain, involved in antigen recognition region. Intrachain disulfides connect Cys-22/Cys-96, Cys-139/Cys-225, Cys-153/Cys-207, Cys-254/Cys-312, Cys-358/Cys-418, and Cys-464/Cys-524. Positions 125-547 (GAWTLPSVFP…QRAVSVNPGK (423 aa)) are constant (C) domain. Residues Asn-145, Asn-173, Asn-219, Asn-265, Asn-371, Asn-383, and Asn-394 are each glycosylated (N-linked (GlcNAc...) asparagine).

As to quaternary structure, immunoglobulins are composed of two identical heavy chains and two identical light chains; disulfide-linked.

It localises to the secreted. The protein resides in the cell membrane. Its function is as follows. Immunoglobulins, also known as antibodies, are membrane-bound or secreted glycoproteins produced by B lymphocytes. In the recognition phase of humoral immunity, the membrane-bound immunoglobulins serve as receptors which, upon binding of a specific antigen, trigger the clonal expansion and differentiation of B lymphocytes into immunoglobulins-secreting plasma cells. Secreted immunoglobulins mediate the effector phase of humoral immunity, which results in the elimination of bound antigens. The antigen binding site is formed by the variable domain of one heavy chain, together with that of its associated light chain. Thus, each immunoglobulin has two antigen binding sites with remarkable affinity for a particular antigen. The variable domains are assembled by a process called V-(D)-J rearrangement and can then be subjected to somatic hypermutations which, after exposure to antigen and selection, allow affinity maturation for a particular antigen. The sequence is that of Immunoglobulin epsilon heavy chain from Homo sapiens (Human).